The primary structure comprises 62 residues: Photosystem II reaction center protein Z (62 aa).

A run of 2 helical transmembrane segments spans residues 8–28 and 41–61; these read ALIS…VAYA and WLGS…NFFV.

The protein belongs to the PsbZ family. PSII is composed of 1 copy each of membrane proteins PsbA, PsbB, PsbC, PsbD, PsbE, PsbF, PsbH, PsbI, PsbJ, PsbK, PsbL, PsbM, PsbT, PsbX, PsbY, PsbZ, Psb30/Ycf12, peripheral proteins PsbO, CyanoQ (PsbQ), PsbU, PsbV and a large number of cofactors. It forms dimeric complexes.

Its subcellular location is the cellular thylakoid membrane. In terms of biological role, may control the interaction of photosystem II (PSII) cores with the light-harvesting antenna, regulates electron flow through the 2 photosystem reaction centers. PSII is a light-driven water plastoquinone oxidoreductase, using light energy to abstract electrons from H(2)O, generating a proton gradient subsequently used for ATP formation. The protein is Photosystem II reaction center protein Z of Trichormus variabilis (strain ATCC 29413 / PCC 7937) (Anabaena variabilis).